The primary structure comprises 211 residues: Thymidylate kinase (211 aa).

10–17 (GGDGVGKS) lines the ATP pocket.

It belongs to the thymidylate kinase family.

The catalysed reaction is dTMP + ATP = dTDP + ADP. Its function is as follows. Phosphorylation of dTMP to form dTDP in both de novo and salvage pathways of dTTP synthesis. The protein is Thymidylate kinase of Clavibacter sepedonicus (Clavibacter michiganensis subsp. sepedonicus).